The chain runs to 430 residues: Trigger factor (430 aa).

Positions 157 to 242 (GDLVALETWS…AVEVSEPVLP (86 aa)) constitute a PPIase FKBP-type domain.

The protein belongs to the FKBP-type PPIase family. Tig subfamily.

The protein localises to the cytoplasm. The catalysed reaction is [protein]-peptidylproline (omega=180) = [protein]-peptidylproline (omega=0). In terms of biological role, involved in protein export. Acts as a chaperone by maintaining the newly synthesized protein in an open conformation. Functions as a peptidyl-prolyl cis-trans isomerase. This is Trigger factor from Xanthomonas campestris pv. campestris (strain B100).